A 256-amino-acid chain; its full sequence is Large ribosomal subunit protein bL28m (256 aa).

The transit peptide at M1–K55 directs the protein to the mitochondrion.

It belongs to the bacterial ribosomal protein bL28 family. In terms of assembly, component of the mitochondrial ribosome large subunit (39S) which comprises a 16S rRNA and about 50 distinct proteins. Interacts with OXA1L.

It localises to the mitochondrion. The polypeptide is Large ribosomal subunit protein bL28m (MRPL28) (Bos taurus (Bovine)).